The chain runs to 966 residues: Receptor protein-tyrosine kinase CEPR1 (966 aa).

The N-terminal stretch at 1-22 is a signal peptide; that stretch reads MRLKNFPFFVLFFFFCFNSNQS. Topologically, residues 23 to 592 are extracellular; the sequence is WGLMSSNQQP…QEPHGKKKLS (570 aa). Residue asparagine 61 is glycosylated (N-linked (GlcNAc...) asparagine). LRR repeat units follow at residues 70–94, 95–120, 122–144, 145–168, 170–194, 195–218, 219–242, 245–267, 268–291, 292–315, 317–339, 341–363, 365–386, 387–411, 412–435, 437–459, 460–483, 484–507, 508–531, and 533–554; these read QGLV…VCSY, FPNL…TIPN, SLLR…FSQM, KSLR…IFNL, DLEY…VSKL, TKLT…IGNL, TSLV…IGNL, LRQL…IGNL, KNLT…ICSL, PNLR…LGNS, TLKI…LGSS, PMIA…VCKS, KLLY…TYGS, CKTL…VMSL, PHVS…IGNA, NLSE…LSHS, TNLV…VGRL, RKLN…LSNL, KSLN…LSEL, and PTSI…LIRG. N-linked (GlcNAc...) asparagine glycosylation is found at asparagine 109, asparagine 120, asparagine 128, and asparagine 167. Asparagine 217 and asparagine 241 each carry an N-linked (GlcNAc...) asparagine glycan. Asparagine 269 and asparagine 301 each carry an N-linked (GlcNAc...) asparagine glycan. Asparagine 437 is a glycosylation site (N-linked (GlcNAc...) asparagine). 2 N-linked (GlcNAc...) asparagine glycosylation sites follow: asparagine 527 and asparagine 537. The chain crosses the membrane as a helical span at residues 593–613; the sequence is SIWAILVSVFILVLGVIMFYL. Over 614-966 the chain is Cytoplasmic; it reads RQRMSKNRAV…VSDHLTQTRL (353 aa). The region spanning 656–934 is the Protein kinase domain; sequence LVDKNIVGHG…TMNEVVQLLI (279 aa). ATP contacts are provided by residues 662 to 670 and lysine 684; that span reads VGHGGSGTV. Residues tyrosine 738 and tyrosine 775 each carry the phosphotyrosine modification. Aspartate 788 serves as the catalytic Proton acceptor. Phosphotyrosine occurs at positions 831 and 838. The disordered stretch occupies residues 937–966; it reads TPQGGPDMTSKPTTKIKDSIVSDHLTQTRL.

This sequence belongs to the protein kinase superfamily. Ser/Thr protein kinase family. Interacts with the root-derived peptides CEP1, CEP3 and CEP5. As to expression, expressed in the vasculature, especially in phloem and procambium regions, of stems, leaves, cotyledons, sepals, pedals, pedicels, hypocotyls and roots (in primary and lateral roots, but not in root tips). Expressed in the root from the basal meristem onward. Present in the phloem pole pericycle and in the adjacent phloem.

The protein localises to the cell membrane. The catalysed reaction is L-tyrosyl-[protein] + ATP = O-phospho-L-tyrosyl-[protein] + ADP + H(+). In terms of biological role, receptor kinase involved in the perception of C-terminally encoded plant signaling peptide (CEP) and subsequent regulation of root and shoot development. Required for xylem and phloem cell files morphology and organization, probably by preventing ectopic lignification in phloem cells. Together with CEPR2, mediates systemic nitrogen (N)-demand signaling upon the perception of root-derived peptides (e.g. CEP1) via the up-regulation of genes involved in N uptake and assimilation pathways. Positively regulates lateral root initiation and development; probably repressed by the signaling peptide CEP5. This is Receptor protein-tyrosine kinase CEPR1 from Arabidopsis thaliana (Mouse-ear cress).